A 321-amino-acid chain; its full sequence is Arginine-hydroxylase NDUFAF5, mitochondrial (321 aa).

A mitochondrion-targeting transit peptide spans 1-25 (MNVSVKSLRGVSRTWRSFSSRQGMN).

It belongs to the methyltransferase superfamily. Interacts with NDUFS7.

It localises to the mitochondrion inner membrane. Its function is as follows. Arginine hydroxylase that mediates hydroxylation of 'Arg-111' of NDUFS7 and is involved in the assembly of mitochondrial NADH:ubiquinone oxidoreductase complex (complex I, MT-ND1) at early stages. May also have methyltransferase activity. This chain is Arginine-hydroxylase NDUFAF5, mitochondrial, found in Danio rerio (Zebrafish).